The following is a 203-amino-acid chain: Regulator of ribosome biosynthesis (203 aa).

Residues 184–203 (RKRLVKKNEKQQRRNMKNAL) are disordered.

The protein belongs to the RRS1 family. As to quaternary structure, component of a hexameric 5S RNP precursor complex, composed of 5S RNA, RRS1, RPF2, RPL5, RPL11A/RPL11B and SYO1; this complex acts as a precursor for ribosome assembly.

It is found in the nucleus. Its function is as follows. Required for ribosome biogenesis. This chain is Regulator of ribosome biosynthesis (RRS1), found in Saccharomyces cerevisiae (strain ATCC 204508 / S288c) (Baker's yeast).